A 389-amino-acid polypeptide reads, in one-letter code: UDP-GlcNAc:betaGal beta-1,3-N-acetylglucosaminyltransferase 8 (389 aa).

At 1 to 7 (MRCRKCQ) the chain is on the cytoplasmic side. Residues 8 to 24 (LCLSALLTLLGLKVYIE) form a helical; Signal-anchor for type II membrane protein membrane-spanning segment. Residues 25–389 (WTSESWLKKA…RHLWVPELQC (365 aa)) are Lumenal-facing. The disordered stretch occupies residues 36-57 (PRGALPSPTPPNAEPTLPTNLS). N-linked (GlcNAc...) asparagine glycosylation is found at Asn-55 and Asn-212.

The protein belongs to the glycosyltransferase 31 family. In terms of assembly, interacts with B3GNT2; this interaction greatly increases B3GNT2 catalytic activity, independently of B3GNT8 enzymatic activity.

The protein localises to the golgi apparatus membrane. It functions in the pathway protein modification; protein glycosylation. Functionally, beta-1,3-N-acetylglucosaminyltransferase that plays a role in the elongation of specific branch structures of multiantennary N-glycans. Has strong activity towards tetraantennary N-glycans and 2,6 triantennary glycans. The sequence is that of UDP-GlcNAc:betaGal beta-1,3-N-acetylglucosaminyltransferase 8 from Mus musculus (Mouse).